The primary structure comprises 235 residues: MKDELFKQSPKKQFEFDKSVASVFDDMINRSVPFYRENLELCGNLLAKILPINASICDLGCSSANFLIFLANLRKDFKLFGVDNSASMVEVAKSKAKAYGLDISFFETNLCEFDFFVCDVFVANYTMQFIRPPKRQELLDKIYKNLNSKGILIMSEKILYEDAFLSKNIIELYADYKEKQGYSKFEIAAKREALENVLIPYSQKENLNMLEKAGFKKIESIFKWANFETFIAFKD.

Residues Tyr-35, Gly-60–Ser-62, Asp-83–Asn-84, Asn-124, and Arg-191 each bind S-adenosyl-L-methionine.

The protein belongs to the class I-like SAM-binding methyltransferase superfamily. Cx-SAM synthase family. Homodimer.

It catalyses the reaction prephenate + S-adenosyl-L-methionine = carboxy-S-adenosyl-L-methionine + 3-phenylpyruvate + H2O. Catalyzes the conversion of S-adenosyl-L-methionine (SAM) to carboxy-S-adenosyl-L-methionine (Cx-SAM). The sequence is that of Carboxy-S-adenosyl-L-methionine synthase from Campylobacter jejuni subsp. jejuni serotype O:6 (strain 81116 / NCTC 11828).